A 128-amino-acid polypeptide reads, in one-letter code: Holo-[acyl-carrier-protein] synthase (128 aa).

2 residues coordinate Mg(2+): D9 and E60.

Belongs to the P-Pant transferase superfamily. AcpS family. The cofactor is Mg(2+).

Its subcellular location is the cytoplasm. The catalysed reaction is apo-[ACP] + CoA = holo-[ACP] + adenosine 3',5'-bisphosphate + H(+). In terms of biological role, transfers the 4'-phosphopantetheine moiety from coenzyme A to a Ser of acyl-carrier-protein. This Buchnera aphidicola subsp. Baizongia pistaciae (strain Bp) protein is Holo-[acyl-carrier-protein] synthase.